Consider the following 436-residue polypeptide: 3-ketoacyl-CoA thiolase (436 aa).

Residue cysteine 99 is the Acyl-thioester intermediate of the active site. Catalysis depends on proton acceptor residues histidine 392 and cysteine 422.

This sequence belongs to the thiolase-like superfamily. Thiolase family. As to quaternary structure, heterotetramer of two alpha chains (FadJ) and two beta chains (FadI).

The protein localises to the cytoplasm. The catalysed reaction is an acyl-CoA + acetyl-CoA = a 3-oxoacyl-CoA + CoA. It functions in the pathway lipid metabolism; fatty acid beta-oxidation. Functionally, catalyzes the final step of fatty acid oxidation in which acetyl-CoA is released and the CoA ester of a fatty acid two carbons shorter is formed. In Escherichia coli O127:H6 (strain E2348/69 / EPEC), this protein is 3-ketoacyl-CoA thiolase.